The chain runs to 492 residues: Vacuolar fusion protein CCZ1 homolog (492 aa).

The segment at 255–275 is disordered; sequence SVHAGPTSSSSNGTASVERPL. The span at 260-269 shows a compositional bias: polar residues; the sequence is PTSSSSNGTA.

It belongs to the CCZ1 family. As to quaternary structure, interacts with MON1.

The protein localises to the endosome. It is found in the prevacuolar compartment. Its function is as follows. Plays an important role in membrane trafficking through the secretory apparatus. In complex with MON1, acts as a guanine exchange factor (GEF) for Rab7 protein family. Promotes the exchange of GDP to GTP, converting it from an inactive GDP-bound form into an active GTP-bound form. The active form is involved in protein trafficking from prevacuolar compartments (PVCs) to vacuoles. May serve as a linker between Rab5 and Rab7 protein families in PVCs and mediate PVC maturation. This Oryza sativa subsp. japonica (Rice) protein is Vacuolar fusion protein CCZ1 homolog.